Consider the following 764-residue polypeptide: Ribosomal protein S6 kinase alpha-6 (764 aa).

Residues 1–24 (MLPFAPVEDPWDQEDMEVFGSTSS) are disordered. One can recognise a Protein kinase 1 domain in the interval 93 to 350 (FDLLKVLGQG…VEEVKRHAFF (258 aa)). Residues 99–107 (LGQGSFGKV) and Lys125 contribute to the ATP site. Asp218 functions as the Proton acceptor in the catalytic mechanism. 3 positions are modified to phosphoserine: Ser252, Ser392, and Ser409. Residues 351 to 420 (ASIDWNKLYK…VATSIAEEYK (70 aa)) form the AGC-kinase C-terminal domain. Residues 446-706 (YELKEDIGIG…VLKHPWITQR (261 aa)) form the Protein kinase 2 domain. ATP-binding positions include 452–460 (IGIGSYSVC) and Lys475. The Proton acceptor role is filled by Asp563. Phosphothreonine is present on Thr601.

This sequence belongs to the protein kinase superfamily. AGC Ser/Thr protein kinase family. S6 kinase subfamily. Forms a complex with MAPK3/ERK1 but not with MAPK9 or MAPK14 in serum-starved cells. Mg(2+) serves as cofactor. In terms of processing, phosphorylated at Ser-252, Ser-392, and Ser-409 in serum-starved cells.

It localises to the cytoplasm. Its subcellular location is the cytosol. The protein localises to the nucleus. It catalyses the reaction L-seryl-[protein] + ATP = O-phospho-L-seryl-[protein] + ADP + H(+). It carries out the reaction L-threonyl-[protein] + ATP = O-phospho-L-threonyl-[protein] + ADP + H(+). Its activity is regulated as follows. Constitutively activated by phosphorylation at Ser-252, Ser-392, and Ser-409 in serum-starved cells. Does not require growth factor stimulation for significant kinase activity. In terms of biological role, constitutively active serine/threonine-protein kinase that exhibits growth-factor-independent kinase activity and that may participate in p53/TP53-dependent cell growth arrest signaling and play an inhibitory role during embryogenesis. This is Ribosomal protein S6 kinase alpha-6 (Rps6ka6) from Mus musculus (Mouse).